The chain runs to 411 residues: Stearoyl-[acyl-carrier-protein] 9-desaturase 2, chloroplastic (411 aa).

The N-terminal 44 residues, 1-44 (MALLLNSTITVAMKQNPLVAVSFPRTTCLGSSFSPPRLLRVSCV), are a transit peptide targeting the chloroplast. Positions 148, 186, 189, 239, 272, and 275 each coordinate Fe cation.

It belongs to the fatty acid desaturase type 2 family. Homodimer. It depends on Fe(2+) as a cofactor. Preferentially expressed in roots and flowers.

The protein resides in the plastid. It localises to the chloroplast. The enzyme catalyses octadecanoyl-[ACP] + 2 reduced [2Fe-2S]-[ferredoxin] + O2 + 2 H(+) = (9Z)-octadecenoyl-[ACP] + 2 oxidized [2Fe-2S]-[ferredoxin] + 2 H2O. It participates in lipid metabolism; fatty acid metabolism. Its function is as follows. Converts stearoyl-ACP to oleoyl-ACP by introduction of a cis double bond between carbons 9 and 10 of the acyl chain. Exhibits delta-9 palmitoyl-[acyl-carrier-protein] desaturase (PAD) activity. Involved in omega-7 monounsaturated fatty acid biosynthesis, especially in the endosperm oil. The polypeptide is Stearoyl-[acyl-carrier-protein] 9-desaturase 2, chloroplastic (S-ACP-DES2) (Arabidopsis thaliana (Mouse-ear cress)).